The chain runs to 1021 residues: Multidrug resistance protein MdtC (1021 aa).

Residues 1-6 (MKFFAL) are Cytoplasmic-facing. The helical transmembrane segment at 7–29 (FIYRPVATILLSVAITLCGILGF) threads the bilayer. Residues 30 to 335 (RMLPVAPLPQ…TIRASLEEVE (306 aa)) lie on the Periplasmic side of the membrane. The helical transmembrane segment at 336 to 353 (QTLIISVALVILVVFLFL) threads the bilayer. The Cytoplasmic segment spans residues 354-359 (RSGRAT). Residues 360-379 (IIPAVAVPVSLIGTFAAMYL) form a helical membrane-spanning segment. Residues 380–388 (CGFSLNNLS) are Periplasmic-facing. Residues 389-411 (LMALTIATGFVVDDAIVVLENIA) traverse the membrane as a helical segment. Residues 412 to 430 (RHLEAGMKPLQAALQGTRE) lie on the Cytoplasmic side of the membrane. Residues 431–453 (VGFTVLSMSLSLVAVFLPLLLMG) traverse the membrane as a helical segment. Residues 454 to 467 (GLPGRLLREFAVTL) are Periplasmic-facing. A helical membrane pass occupies residues 468–490 (SVAIGISLLVSLTLTPMMCGWML). The Cytoplasmic portion of the chain corresponds to 491 to 848 (KASKPREQKR…QVFQETMNSQ (358 aa)). A helical membrane pass occupies residues 849–871 (VILIIAAIATVYIVLGILYESYV). Residues 872-890 (HPLTILSTLPSAGVGALLA) are Periplasmic-facing. Residues 891-913 (LELFNAPFSLIALIGIMLLIGIV) form a helical membrane-spanning segment. Topologically, residues 914–943 (KKNAIMMVDFALEAQRHGNLTPQEAIFQAC) are cytoplasmic. Residues 944–966 (LLRFRPIMMTTLAALFGALPLVL) traverse the membrane as a helical segment. The Periplasmic portion of the chain corresponds to 967 to 980 (SGGDGSELRQPLEI). The helical transmembrane segment at 981–1003 (TIVGGLVMSQLLTLYTTPVVYLF) threads the bilayer. At 1004 to 1021 (FDRLRLRFSRKPKQTVTE) the chain is on the cytoplasmic side.

Belongs to the resistance-nodulation-cell division (RND) (TC 2.A.6) family. MdtC subfamily. In terms of assembly, part of a tripartite efflux system composed of MdtA, MdtB and MdtC. MdtC forms a heteromultimer with MdtB.

The protein localises to the cell inner membrane. The chain is Multidrug resistance protein MdtC from Shigella flexneri.